Reading from the N-terminus, the 473-residue chain is Siroheme synthase (473 aa).

The precorrin-2 dehydrogenase /sirohydrochlorin ferrochelatase stretch occupies residues Met-1–Leu-206. NAD(+) contacts are provided by residues Thr-22–Val-23 and Pro-43–Lys-44. Residues Gly-223–Ala-473 form a uroporphyrinogen-III C-methyltransferase region. Pro-232 contributes to the S-adenosyl-L-methionine binding site. The active-site Proton acceptor is Asp-255. Lys-277 (proton donor) is an active-site residue. Residues Gly-308–Asp-310, Ile-313, Thr-338–Ala-339, Met-390, and Gly-419 each bind S-adenosyl-L-methionine.

In the N-terminal section; belongs to the precorrin-2 dehydrogenase / sirohydrochlorin ferrochelatase family. This sequence in the C-terminal section; belongs to the precorrin methyltransferase family.

It carries out the reaction uroporphyrinogen III + 2 S-adenosyl-L-methionine = precorrin-2 + 2 S-adenosyl-L-homocysteine + H(+). It catalyses the reaction precorrin-2 + NAD(+) = sirohydrochlorin + NADH + 2 H(+). The enzyme catalyses siroheme + 2 H(+) = sirohydrochlorin + Fe(2+). It participates in cofactor biosynthesis; adenosylcobalamin biosynthesis; precorrin-2 from uroporphyrinogen III: step 1/1. The protein operates within cofactor biosynthesis; adenosylcobalamin biosynthesis; sirohydrochlorin from precorrin-2: step 1/1. Its pathway is porphyrin-containing compound metabolism; siroheme biosynthesis; precorrin-2 from uroporphyrinogen III: step 1/1. It functions in the pathway porphyrin-containing compound metabolism; siroheme biosynthesis; siroheme from sirohydrochlorin: step 1/1. It participates in porphyrin-containing compound metabolism; siroheme biosynthesis; sirohydrochlorin from precorrin-2: step 1/1. Functionally, multifunctional enzyme that catalyzes the SAM-dependent methylations of uroporphyrinogen III at position C-2 and C-7 to form precorrin-2 via precorrin-1. Then it catalyzes the NAD-dependent ring dehydrogenation of precorrin-2 to yield sirohydrochlorin. Finally, it catalyzes the ferrochelation of sirohydrochlorin to yield siroheme. This is Siroheme synthase from Hydrogenovibrio crunogenus (strain DSM 25203 / XCL-2) (Thiomicrospira crunogena).